The chain runs to 411 residues: Na(+)-translocating NADH-quinone reductase subunit F (411 aa).

A helical membrane pass occupies residues 6-26 (AIGGVAMFTLIIMGLVAIILA). One can recognise a 2Fe-2S ferredoxin-type domain in the interval 35-129 (GDVTIHINDN…DMKIEIDPEF (95 aa)). [2Fe-2S] cluster-binding residues include Cys72, Cys78, Cys81, and Cys113. An FAD-binding FR-type domain is found at 132 to 273 (VQKWECEVIS…SGPYGEFFAK (142 aa)).

This sequence belongs to the NqrF family. As to quaternary structure, composed of six subunits; NqrA, NqrB, NqrC, NqrD, NqrE and NqrF. It depends on [2Fe-2S] cluster as a cofactor. FAD is required as a cofactor.

The protein localises to the cell inner membrane. The catalysed reaction is a ubiquinone + n Na(+)(in) + NADH + H(+) = a ubiquinol + n Na(+)(out) + NAD(+). Functionally, NQR complex catalyzes the reduction of ubiquinone-1 to ubiquinol by two successive reactions, coupled with the transport of Na(+) ions from the cytoplasm to the periplasm. The first step is catalyzed by NqrF, which accepts electrons from NADH and reduces ubiquinone-1 to ubisemiquinone by a one-electron transfer pathway. This Psychrobacter cryohalolentis (strain ATCC BAA-1226 / DSM 17306 / VKM B-2378 / K5) protein is Na(+)-translocating NADH-quinone reductase subunit F.